The sequence spans 880 residues: Inner centromere protein (880 aa).

The tract at residues 52-104 is disordered; it reads EPELMPKTPSQKNRRKKRRVSNIQDENRDPVRKRLSRRKSRSSQVGTRHLRSK. A phosphoserine mark is found at Ser72, Ser142, and Ser147. 2 positions are modified to phosphothreonine: Thr149 and Thr189. The disordered stretch occupies residues 175 to 229; that stretch reads KGSLPPSPVSQGTLTSEEELTPKKSEAGKLDSVTVNSLKATPQSPKNRGVGEGRS. Position 190 is a phosphoserine (Ser190). Positions 194 to 203 are enriched in basic and acidic residues; sequence LTPKKSEAGK. Phosphothreonine is present on residues Thr195 and Thr215. Residues 207 to 220 show a composition bias toward polar residues; the sequence is VTVNSLKATPQSPK. 6 positions are modified to phosphoserine: Ser218, Ser239, Ser245, Ser248, Ser251, and Ser259. Thr270 carries the phosphothreonine modification. Ser284 and Ser290 each carry phosphoserine. 2 disordered regions span residues 303 to 322 and 350 to 461; these read KQEN…AGKE and EQEP…PANK. A compositionally biased stretch (acidic residues) spans 352–366; the sequence is EPVEVAEPEEAEEEQ. Ser376 is modified (phosphoserine). Thr382 carries the post-translational modification Phosphothreonine. Residues 385–402 show a composition bias toward polar residues; it reads AISTPTSKPAAAGQTTTV. Position 421 is a phosphoserine (Ser421). The segment covering 434 to 445 has biased composition (acidic residues); sequence EPDEEQLEDEEL. N-linked (GlcNAc...) asparagine glycosylation is present at Asn450. Thr452 is modified (phosphothreonine). Ser454 and Ser488 each carry phosphoserine. An SAH region spans residues 506 to 733; it reads KCSFVEKERQ…EEKKRKEEQQ (228 aa). Positions 506–759 form a coiled coil; sequence KCSFVEKERQ…EVAAARKVLN (254 aa). Disordered stretches follow at residues 513–541, 563–617, 629–713, and 775–813; these read ERQR…KRRR, VEQM…KQEE, EEER…KALR, and TPQG…IPSW. 3 stretches are compositionally biased toward basic and acidic residues: residues 563-596, 604-617, and 630-713; these read VEQM…LAEK, KKME…KQEE, and EERR…KALR. Positions 794-868 are IN box; sequence LNSDDSTDDE…RTSSAVWNSP (75 aa). Phosphoserine occurs at positions 796 and 799. The residue at position 800 (Thr800) is a Phosphothreonine. The residue at position 860 (Thr860) is a Phosphothreonine; by AURKB. Phosphoserine occurs at positions 861, 862, and 867.

Belongs to the INCENP family. As to quaternary structure, component of the chromosomal passenger complex (CPC) composed of at least BIRC5/survivin, CDCA8/borealin, INCENP, AURKB or AURKC; in the complex binds directly to AURKB or AURKC via the IN box, and forms a triple-helix bundle-based subcomplex with BIRC5 and CDCA8 via its N-terminus. The reported homodimerization is questioned as the SAH domain is shown to be monomeric. Interacts with H2AZ1. Interacts with CBX1 and CBX3. Interacts with tubulin beta chain. Interacts with EVI5. Interacts with CBX5; POGZ and INCENP compete for interaction with CBX5. Interacts with POGZ. Interacts with JTB. In terms of processing, phosphorylation by AURKB at its C-terminal part is important for AURKB activation by INCENP.

The protein resides in the chromosome. Its subcellular location is the centromere. It localises to the cytoplasm. It is found in the cytoskeleton. The protein localises to the spindle. The protein resides in the nucleus. Its subcellular location is the kinetochore. It localises to the midbody. Component of the chromosomal passenger complex (CPC), a complex that acts as a key regulator of mitosis. The CPC complex has essential functions at the centromere in ensuring correct chromosome alignment and segregation and is required for chromatin-induced microtubule stabilization and spindle assembly. Acts as a scaffold regulating CPC localization and activity. The C-terminus associates with AURKB or AURKC, the N-terminus associated with BIRC5/survivin and CDCA8/borealin tethers the CPC to the inner centromere, and the microtubule binding activity within the central SAH domain directs AURKB/C toward substrates near microtubules. The flexibility of the SAH domain is proposed to allow AURKB/C to follow substrates on dynamic microtubules while ensuring CPC docking to static chromatin. Activates AURKB and AURKC. Controls the kinetochore localization of BUB1. The chain is Inner centromere protein (Incenp) from Mus musculus (Mouse).